The chain runs to 200 residues: GTP-binding protein rho2 (200 aa).

15-22 contributes to the GTP binding site; sequence GDGACGKT. The short motif at 37–45 is the Effector region element; the sequence is YVPTVFENY. GTP-binding positions include 62-66 and 120-123; these read DTAGQ and MKAD. Residue Cys-197 is modified to Cysteine methyl ester. Cys-197 is lipidated: S-geranylgeranyl cysteine. Positions 198-200 are cleaved as a propeptide — removed in mature form; it reads IIS.

The protein belongs to the small GTPase superfamily. Rho family. As to quaternary structure, interacts with pck2.

Its subcellular location is the cell membrane. Involved in cell morphogenesis, the maintenance of growth direction, control of polarity and of cell wall integrity. Regulates the synthesis of alpha-D-glucan through activation of pck2. The polypeptide is GTP-binding protein rho2 (rho2) (Schizosaccharomyces pombe (strain 972 / ATCC 24843) (Fission yeast)).